A 555-amino-acid polypeptide reads, in one-letter code: Membrane protein insertase YidC (555 aa).

Residues 7–24 (ILWVIFSMSLVLLYDNWQ) form a helical membrane-spanning segment. Residues 61–81 (TAGAAAPAAPGGAPQAAAQPT) are disordered. Transmembrane regions (helical) follow at residues 341–361 (GWLTILAKPLFWLLEKLHGFL), 364–384 (WGWSIIALTVLIKLVFFPLSA), 430–450 (LGGCLPIVIQIPVFIALYWVL), 468–488 (LSVPDPFYILPIVMAVSMFVQ), and 503–523 (VMMIMPLVFSFMFFFFPAGLV).

Belongs to the OXA1/ALB3/YidC family. Type 1 subfamily. In terms of assembly, interacts with the Sec translocase complex via SecD. Specifically interacts with transmembrane segments of nascent integral membrane proteins during membrane integration.

It is found in the cell inner membrane. Functionally, required for the insertion and/or proper folding and/or complex formation of integral membrane proteins into the membrane. Involved in integration of membrane proteins that insert both dependently and independently of the Sec translocase complex, as well as at least some lipoproteins. Aids folding of multispanning membrane proteins. The chain is Membrane protein insertase YidC from Cupriavidus pinatubonensis (strain JMP 134 / LMG 1197) (Cupriavidus necator (strain JMP 134)).